Consider the following 60-residue polypeptide: Potassium channel toxin alpha-KTx 12.5 (60 aa).

An N-terminal signal peptide occupies residues 1 to 22; that stretch reads MNKLPILIFMLLVCSMFISSDC. Cystine bridges form between C30–C51, C36–C56, and C40–C58.

This sequence belongs to the short scorpion toxin superfamily. Potassium channel inhibitor family. Alpha-KTx 12 subfamily. In terms of tissue distribution, expressed by the venom gland.

The protein resides in the secreted. This recombinant toxin inhibits the mammalian voltage-gated potassium channels Kv1.3/KCNA3 (IC(50)=28 nM). Kv1.1/KCNA1 and Kv1.2/KCNA2 potassium channels are also weakly inhibited (IC(50)=1.73 uM and IC(50)=12.63 uM, respectively). In Lychas mucronatus (Chinese swimming scorpion), this protein is Potassium channel toxin alpha-KTx 12.5.